The chain runs to 590 residues: Oligoendopeptidase F homolog (590 aa).

His-381 provides a ligand contact to Zn(2+). The active site involves Glu-382. Zn(2+) is bound by residues His-385 and His-388.

The protein belongs to the peptidase M3B family. Zn(2+) serves as cofactor.

This chain is Oligoendopeptidase F homolog (pepF), found in Borreliella burgdorferi (strain ATCC 35210 / DSM 4680 / CIP 102532 / B31) (Borrelia burgdorferi).